Consider the following 384-residue polypeptide: 8-amino-7-oxononanoate synthase (384 aa).

Position 21 (Arg-21) interacts with substrate. 108-109 (GF) provides a ligand contact to pyridoxal 5'-phosphate. Residue His-133 coordinates substrate. Residues Ser-179, His-207, and Thr-233 each contribute to the pyridoxal 5'-phosphate site. Lys-236 is modified (N6-(pyridoxal phosphate)lysine). Thr-352 serves as a coordination point for substrate.

Belongs to the class-II pyridoxal-phosphate-dependent aminotransferase family. BioF subfamily. As to quaternary structure, homodimer. It depends on pyridoxal 5'-phosphate as a cofactor.

It carries out the reaction 6-carboxyhexanoyl-[ACP] + L-alanine + H(+) = (8S)-8-amino-7-oxononanoate + holo-[ACP] + CO2. It participates in cofactor biosynthesis; biotin biosynthesis. Its function is as follows. Catalyzes the decarboxylative condensation of pimeloyl-[acyl-carrier protein] and L-alanine to produce 8-amino-7-oxononanoate (AON), [acyl-carrier protein], and carbon dioxide. The polypeptide is 8-amino-7-oxononanoate synthase (Escherichia coli O7:K1 (strain IAI39 / ExPEC)).